A 446-amino-acid chain; its full sequence is Nuclear distribution protein nudF (446 aa).

The 33-residue stretch at 9 to 41 (QAEELHKSMVAYLSSIKASQSSNTLREELGIGD) folds into the LisH domain. Positions 60-86 (TGIARLQRKILDLESKITSLQAELDSV) form a coiled coil. WD repeat units follow at residues 113-154 (SHRD…RTLK), 156-196 (HMRG…ANIR), 200-240 (GHDH…CVRT), 243-282 (SNSIWFLDVSPSFDGKWLVAGGRDQAVTVWEVSSAEPRAA), 285-345 (GHDN…IKTL), 347-386 (GHDNWIRGLVFHPSGKYLFSVSDDKTIRCWDLSQEGRLVK), 391-430 (AHGHFISCIRWAPPPRNAAAEASETTNGVSKKAPTKPAFQ), and 432-446 (VIATGSADSCVRVFK).

This sequence belongs to the WD repeat LIS1/nudF family. As to quaternary structure, self-associates. Interacts with nudE and dynein.

The protein resides in the cytoplasm. It localises to the cytoskeleton. The protein localises to the spindle pole. Its function is as follows. Positively regulates the activity of the minus-end directed microtubule motor protein dynein. May enhance dynein-mediated microtubule sliding by targeting dynein to the microtubule plus end. Required for nuclear migration during vegetative growth as well as development. Required for retrograde early endosome (EE) transport from the hyphal tip. Required for localization of dynein to the mitotic spindle poles. Recruits additional proteins to the dynein complex at SPBs. The sequence is that of Nuclear distribution protein nudF from Aspergillus terreus (strain NIH 2624 / FGSC A1156).